A 346-amino-acid polypeptide reads, in one-letter code: Probable galacturonosyltransferase-like 6 (346 aa).

Residues 1-21 (MLWITRFAGLFSAAMAVIVLS) traverse the membrane as a helical; Signal-anchor for type II membrane protein segment. At 22–346 (PSLQSFPPAA…TPYDLYRHSH (325 aa)) the chain is on the lumenal side. Asparagine 203 is a glycosylation site (N-linked (GlcNAc...) asparagine).

It belongs to the glycosyltransferase 8 family.

The protein resides in the golgi apparatus membrane. The protein operates within glycan metabolism; pectin biosynthesis. In terms of biological role, may be involved in pectin and/or xylans biosynthesis in cell walls. The sequence is that of Probable galacturonosyltransferase-like 6 (GATL6) from Arabidopsis thaliana (Mouse-ear cress).